Consider the following 147-residue polypeptide: uncharacterized protein (147 aa).

A helical transmembrane segment spans residues 3-23; it reads APMVGMVVLVVTLGAAVLALS.

The protein to M.tuberculosis Rv1312.

It localises to the membrane. This is an uncharacterized protein from Mycobacterium leprae (strain TN).